Here is a 249-residue protein sequence, read N- to C-terminus: Type III pantothenate kinase (249 aa).

D6–K13 is an ATP binding site. Substrate-binding positions include Y93 and G100–R103. D102 functions as the Proton acceptor in the catalytic mechanism. D122 contributes to the K(+) binding site. ATP is bound at residue T125. T181 is a binding site for substrate.

Belongs to the type III pantothenate kinase family. As to quaternary structure, homodimer. NH4(+) is required as a cofactor. The cofactor is K(+).

It localises to the cytoplasm. The catalysed reaction is (R)-pantothenate + ATP = (R)-4'-phosphopantothenate + ADP + H(+). Its pathway is cofactor biosynthesis; coenzyme A biosynthesis; CoA from (R)-pantothenate: step 1/5. Functionally, catalyzes the phosphorylation of pantothenate (Pan), the first step in CoA biosynthesis. The polypeptide is Type III pantothenate kinase (Pseudomonas putida (strain W619)).